Here is a 1972-residue protein sequence, read N- to C-terminus: Myosin-11 (1972 aa).

3 positions are modified to phosphoserine: Ser8, Ser23, and Ser40. The region spanning 31 to 81 (VAKKLVWVPSEKQGFEAASIKEEKGDEVVVELVENGKKVTVGKDDIQKMNP) is the Myosin N-terminal SH3-like domain. The region spanning 85-783 (SKVEDMAELT…VLAHLEEERD (699 aa)) is the Myosin motor domain. Lys129 is subject to N6,N6,N6-trimethyllysine. 178–185 (GESGAGKT) provides a ligand contact to ATP. Actin-binding regions lie at residues 661 to 683 (LGKLMATLRNTTANFVRCIIPNH) and 762 to 776 (RIGQSKIFFRTGVLA). Positions 786 to 815 (ITDVIMAFQAMCRGYLARKAFTKRQQQLTA) constitute an IQ domain. The stretch at 844-1934 (LLQVTRQEEE…KSKLRRGNEA (1091 aa)) forms a coiled coil. Thr1177 is subject to Phosphothreonine. A phosphoserine mark is found at Ser1684 and Ser1722. Positions 1771-1788 (NELATERSTAQKNESARQ) are enriched in polar residues. Disordered regions lie at residues 1771 to 1797 (NELATERSTAQKNESARQQLERQNKEL) and 1867 to 1972 (QYKE…KASE). A compositionally biased stretch (basic and acidic residues) spans 1867 to 1876 (QYKEQAEKGN). The interval 1935-1972 (SFVPSRRAGGRRVIENTDGSEEEMDARDSDFNGTKASE) is C-terminal. Thr1951 is modified (phosphothreonine). 2 positions are modified to phosphoserine: Ser1954 and Ser1971.

This sequence belongs to the TRAFAC class myosin-kinesin ATPase superfamily. Myosin family. In terms of assembly, muscle myosin is a hexameric protein that consists of 2 heavy chain subunits (MHC), 2 alkali light chain subunits (MLC) and 2 regulatory light chain subunits (MLC-2).

It is found in the melanosome. It localises to the cytoplasm. Its subcellular location is the myofibril. Its function is as follows. Muscle contraction. This chain is Myosin-11 (Myh11), found in Mus musculus (Mouse).